The chain runs to 366 residues: Growth hormone secretagogue receptor type 1 (366 aa).

Residues 1–40 (MWNATPSEEPGPNLTLPDLGWDAPPENDSLVEELLPLFPT) are Extracellular-facing. N-linked (GlcNAc...) asparagine glycans are attached at residues Asn-13 and Asn-27. A helical membrane pass occupies residues 41–66 (PLLAGVTATCVALFVVGIAGNLLTML). The Cytoplasmic portion of the chain corresponds to 67–72 (VVSRFR). The helical transmembrane segment at 73 to 96 (EMRTTTNLYLSSMAFSDLLIFLCM) threads the bilayer. Residues 97-117 (PLDLFRLWQYRPWNLGNLLCK) lie on the Extracellular side of the membrane. Residues Cys-116 and Cys-198 are joined by a disulfide bond. A helical transmembrane segment spans residues 118 to 139 (LFQFVSESCTYATVLTITALSV). Residues 140-162 (ERYFAICFPLRAKVVVTKGRVKL) are Cytoplasmic-facing. The chain crosses the membrane as a helical span at residues 163 to 183 (VILVIWAVAFCSAGPIFVLVG). Over 184–211 (VEHDNGTDPRDTNECRATEFAVRSGLLT) the chain is Extracellular. A helical transmembrane segment spans residues 212–235 (VMVWVSSVFFFLPVFCLTVLYSLI). Residues 236–263 (GRKLWRRKRGEAAVGSSLRDQNHKQTVK) lie on the Cytoplasmic side of the membrane. The helical transmembrane segment at 264-285 (MLAVVVFAFILCWLPFHVGRYL) threads the bilayer. Residues 286–302 (FSKSLEPGSVEIAQISQ) are Extracellular-facing. A helical membrane pass occupies residues 303–326 (YCNLVSFVLFYLSAAINPILYNIM). Residues 327–366 (SKKYRVAVFKLLGFEPFSQRKLSTLKDESSRAWTESSINT) are Cytoplasmic-facing.

It belongs to the G-protein coupled receptor 1 family. As to expression, pituitary and hypothalamus.

The protein resides in the cell membrane. Receptor for ghrelin, coupled to G-alpha-11 proteins. Stimulates growth hormone secretion. Also binds other growth hormone releasing peptides (GHRP) (e.g. Met-enkephalin and GHRP-6) as well as non-peptide, low molecular weight secretagogues (e.g. L-692,429, MK-0677, adenosine). This is Growth hormone secretagogue receptor type 1 (GHSR) from Sus scrofa (Pig).